Here is a 511-residue protein sequence, read N- to C-terminus: MSSHIQIFDTTLRDGEQTPGVNFSFDERLKIAKQLEKWGVDIIEAGFPASSSGSFKSVEAIAKTLTTTAVCGLARCVKKDIDAVYESTKAAAKPRIHVFIATSPIHRDSKLMMSKEEVLASIKEHVSYAKQYFDVVQFSPEDATRTELPFLIECVQTAVDAGASVINIPDTVGFSYPKEYGEIFKTLQESVHADHDVIYSAHCHDDLGLAVANSMAAIENGAKRIEGTLNGIGERAGNTALEEVALGLYVRQDHYDNQTQINLEETKQTSDLIARFAGIRVPRNKAIVGQNAFSHESGIHQDGVLKNPETYEIMTPQLVGVKTTELPLGKLSGKHAFAEKLTALGYDVDPEEQKTLFKQFKTVADKKKAVTDRDIHALIQGTEHEQNAIYKVETLQLQFVSNGLQSAVVVIKDIDGNTYQDSSIGTGSIVSVYNAVDRIFDRKTELIEYRIDSVTEGTDAQAEVHVQIKIDDQIVTGVGIDHDILLASCKSYVEAHAKYVANTKVEEGIHS.

Residues 5 to 267 form the Pyruvate carboxyltransferase domain; it reads IQIFDTTLRD…QTQINLEETK (263 aa). 4 residues coordinate Mn(2+): Asp-14, His-202, His-204, and Asn-238. Residues 391-511 form a regulatory domain region; it reads KVETLQLQFV…NTKVEEGIHS (121 aa).

This sequence belongs to the alpha-IPM synthase/homocitrate synthase family. LeuA type 1 subfamily. In terms of assembly, homodimer. It depends on Mn(2+) as a cofactor.

The protein localises to the cytoplasm. The enzyme catalyses 3-methyl-2-oxobutanoate + acetyl-CoA + H2O = (2S)-2-isopropylmalate + CoA + H(+). It participates in amino-acid biosynthesis; L-leucine biosynthesis; L-leucine from 3-methyl-2-oxobutanoate: step 1/4. Catalyzes the condensation of the acetyl group of acetyl-CoA with 3-methyl-2-oxobutanoate (2-ketoisovalerate) to form 3-carboxy-3-hydroxy-4-methylpentanoate (2-isopropylmalate). The protein is 2-isopropylmalate synthase of Staphylococcus saprophyticus subsp. saprophyticus (strain ATCC 15305 / DSM 20229 / NCIMB 8711 / NCTC 7292 / S-41).